A 242-amino-acid chain; its full sequence is Uridylate kinase (242 aa).

Lysine 15 to glycine 18 is a binding site for ATP. An involved in allosteric activation by GTP region spans residues glycine 23–glycine 28. Glycine 57 is a UMP binding site. Positions 58 and 62 each coordinate ATP. UMP-binding positions include aspartate 77 and threonine 138–threonine 145. ATP contacts are provided by threonine 165, tyrosine 171, and aspartate 174.

It belongs to the UMP kinase family. As to quaternary structure, homohexamer.

It localises to the cytoplasm. The catalysed reaction is UMP + ATP = UDP + ADP. It functions in the pathway pyrimidine metabolism; CTP biosynthesis via de novo pathway; UDP from UMP (UMPK route): step 1/1. Its activity is regulated as follows. Allosterically activated by GTP. Inhibited by UTP. In terms of biological role, catalyzes the reversible phosphorylation of UMP to UDP. In Photorhabdus laumondii subsp. laumondii (strain DSM 15139 / CIP 105565 / TT01) (Photorhabdus luminescens subsp. laumondii), this protein is Uridylate kinase.